A 219-amino-acid polypeptide reads, in one-letter code: Proteasome subunit beta (219 aa).

The propeptide at 1–14 (MISNSEYHKEYMKG) is removed in mature form; by autocatalysis. The active-site Nucleophile is T15.

It belongs to the peptidase T1B family. In terms of assembly, the 20S proteasome core is composed of 14 alpha and 14 beta subunits that assemble into four stacked heptameric rings, resulting in a barrel-shaped structure. The two inner rings, each composed of seven catalytic beta subunits, are sandwiched by two outer rings, each composed of seven alpha subunits. The catalytic chamber with the active sites is on the inside of the barrel. Has a gated structure, the ends of the cylinder being occluded by the N-termini of the alpha-subunits. Is capped at one or both ends by the proteasome regulatory ATPase, PAN.

It localises to the cytoplasm. The catalysed reaction is Cleavage of peptide bonds with very broad specificity.. With respect to regulation, the formation of the proteasomal ATPase PAN-20S proteasome complex, via the docking of the C-termini of PAN into the intersubunit pockets in the alpha-rings, triggers opening of the gate for substrate entry. Interconversion between the open-gate and close-gate conformations leads to a dynamic regulation of the 20S proteasome proteolysis activity. Its function is as follows. Component of the proteasome core, a large protease complex with broad specificity involved in protein degradation. The chain is Proteasome subunit beta from Methanococcus maripaludis (strain C5 / ATCC BAA-1333).